The following is a 699-amino-acid chain: Elongation factor G (699 aa).

In terms of domain architecture, tr-type G spans 8–288; sequence EDYRNFGIMA…AVVDYLPSPL (281 aa). Residues 17–24, 86–90, and 140–143 contribute to the GTP site; these read AHIDAGKT, DTPGH, and NKMD.

It belongs to the TRAFAC class translation factor GTPase superfamily. Classic translation factor GTPase family. EF-G/EF-2 subfamily.

The protein resides in the cytoplasm. Catalyzes the GTP-dependent ribosomal translocation step during translation elongation. During this step, the ribosome changes from the pre-translocational (PRE) to the post-translocational (POST) state as the newly formed A-site-bound peptidyl-tRNA and P-site-bound deacylated tRNA move to the P and E sites, respectively. Catalyzes the coordinated movement of the two tRNA molecules, the mRNA and conformational changes in the ribosome. In Rhizobium etli (strain CIAT 652), this protein is Elongation factor G.